The chain runs to 867 residues: uncharacterized protein (867 aa).

An SPX domain is found at 1-294 (MKFSHSLQFN…GSSLRESYMK (294 aa)). Disordered regions lie at residues 105-152 (QGNN…GQTS) and 165-228 (ESTA…NNNR). Over residues 138-152 (ITSSNREIYLNGQTS) the composition is skewed to polar residues. The segment covering 198-223 (GNDDEVEEEDDDDDDEDEDEDEDEDN) has biased composition (acidic residues). 12 helical membrane-spanning segments follow: residues 406-426 (TIAT…FPVI), 434-454 (CLAL…PLFV), 485-505 (VIFS…FTIA), 537-557 (MFVA…VLCF), 576-596 (ILIV…PISS), 616-636 (FAVS…LLSF), 656-676 (FTGV…LWCL), 683-703 (VFGD…GTGL), 712-732 (FLWT…VVSS), 755-775 (VLLI…HIVA), 797-817 (LFVL…TSGF), and 842-862 (AGIP…TPIM).

The protein belongs to the CitM (TC 2.A.11) transporter family.

It localises to the endoplasmic reticulum membrane. This is an uncharacterized protein from Schizosaccharomyces pombe (strain 972 / ATCC 24843) (Fission yeast).